The primary structure comprises 491 residues: Nucleoside transporter 1.2 (491 aa).

A run of 6 helical transmembrane segments spans residues 27–47 (FYVY…VNAV), 82–102 (YNLI…LSWF), 109–129 (VRLL…MVVP), 136–156 (AGAV…KSIF), 173–193 (STMM…QIIV), and 209–229 (KIYY…LILL). Positions 261-273 (HTDEHPTHDKEGR) are enriched in basic and acidic residues. Disordered regions lie at residues 261–280 (HTDE…SGKE) and 290–309 (AAAK…PHEV). N-linked (GlcNAc...) asparagine glycosylation is present at N274. Helical transmembrane passes span 333-353 (MFVA…GIAV), 361-381 (WFST…RFSP), 395-415 (WIIV…LLHS), 427-447 (VMEV…LVLG), and 460-480 (FVAG…GTVL).

This sequence belongs to the SLC29A/ENT transporter (TC 2.A.57) family.

Its subcellular location is the membrane. The enzyme catalyses adenosine(in) + H(+)(in) = adenosine(out) + H(+)(out). It carries out the reaction uridine(in) + H(+)(in) = uridine(out) + H(+)(out). Its function is as follows. Sodium-independent nucleoside:H(+) symporter; transports adenosine with high affinity and uridine with moderate affinity. Can transport cytidine and thymidine. The sequence is that of Nucleoside transporter 1.2 from Leishmania donovani.